A 412-amino-acid chain; its full sequence is Serine hydroxymethyltransferase (412 aa).

Residues L117 and 121–123 (GHL) contribute to the (6S)-5,6,7,8-tetrahydrofolate site. Position 226 is an N6-(pyridoxal phosphate)lysine (K226).

The protein belongs to the SHMT family. Homodimer. Pyridoxal 5'-phosphate is required as a cofactor.

Its subcellular location is the cytoplasm. The catalysed reaction is (6R)-5,10-methylene-5,6,7,8-tetrahydrofolate + glycine + H2O = (6S)-5,6,7,8-tetrahydrofolate + L-serine. The protein operates within one-carbon metabolism; tetrahydrofolate interconversion. Its pathway is amino-acid biosynthesis; glycine biosynthesis; glycine from L-serine: step 1/1. Its function is as follows. Catalyzes the reversible interconversion of serine and glycine with tetrahydrofolate (THF) serving as the one-carbon carrier. This reaction serves as the major source of one-carbon groups required for the biosynthesis of purines, thymidylate, methionine, and other important biomolecules. Also exhibits THF-independent aldolase activity toward beta-hydroxyamino acids, producing glycine and aldehydes, via a retro-aldol mechanism. This Staphylococcus aureus (strain bovine RF122 / ET3-1) protein is Serine hydroxymethyltransferase.